The primary structure comprises 610 residues: Cytosolic 5'-nucleotidase 1B (610 aa).

Disordered regions lie at residues 1-34 and 101-277; these read MSQT…DKTG and GSQE…DEDD. Positions 9 to 34 are enriched in basic and acidic residues; the sequence is KKNEPGMRSSKESLEAEKRKESDKTG. Positions 119 to 132 are enriched in polar residues; it reads SQWSRISRSPSTKA. The span at 148–166 shows a compositional bias: low complexity; it reads PSSSTSSRTPSTSPSLHDS. A compositionally biased stretch (pro residues) spans 167–183; it reads SPPPLSGQPSLQPPASP. The segment covering 236–265 has biased composition (polar residues); that stretch reads SRTSPTEWKSSSQRRGIYPASTQLDRNSLS. Asp467 functions as the Nucleophile in the catalytic mechanism.

The protein belongs to the 5'-nucleotidase type 3 family. It depends on Mg(2+) as a cofactor. Highly expressed in testis, placenta and pancreas. Detected at lower levels in heart, kidney, liver and lung.

The protein resides in the cytoplasm. It catalyses the reaction a ribonucleoside 5'-phosphate + H2O = a ribonucleoside + phosphate. The catalysed reaction is AMP + H2O = adenosine + phosphate. Its activity is regulated as follows. Activated by ADP. Catalyzes the hydrolysis of nucleotide monophosphates, releasing inorganic phosphate and the corresponding nucleoside, AMP is the major substrate. This chain is Cytosolic 5'-nucleotidase 1B (NT5C1B), found in Homo sapiens (Human).